The sequence spans 215 residues: Guanylate kinase (215 aa).

Residues 9–187 (GTLYIVSAPS…ALDELSCLVH (179 aa)) enclose the Guanylate kinase-like domain. An ATP-binding site is contributed by 16–23 (APSGAGKT).

It belongs to the guanylate kinase family.

Its subcellular location is the cytoplasm. The catalysed reaction is GMP + ATP = GDP + ADP. Functionally, essential for recycling GMP and indirectly, cGMP. This is Guanylate kinase from Chromohalobacter salexigens (strain ATCC BAA-138 / DSM 3043 / CIP 106854 / NCIMB 13768 / 1H11).